A 309-amino-acid chain; its full sequence is UDP-N-acetylenolpyruvoylglucosamine reductase (309 aa).

One can recognise an FAD-binding PCMH-type domain in the interval 24–187 (RVGGPADWLF…TKAVFEAPRG (164 aa)). Residue Arg-167 is part of the active site. The span at 200–213 (LARRDATQPTKERS) shows a compositional bias: basic and acidic residues. The tract at residues 200-230 (LARRDATQPTKERSAGSTFRNPAGFSSTGRS) is disordered. A compositionally biased stretch (polar residues) spans 214–228 (AGSTFRNPAGFSSTG). Ser-216 (proton donor) is an active-site residue. The active site involves Glu-298.

This sequence belongs to the MurB family. The cofactor is FAD.

It is found in the cytoplasm. It catalyses the reaction UDP-N-acetyl-alpha-D-muramate + NADP(+) = UDP-N-acetyl-3-O-(1-carboxyvinyl)-alpha-D-glucosamine + NADPH + H(+). Its pathway is cell wall biogenesis; peptidoglycan biosynthesis. Its function is as follows. Cell wall formation. In Roseobacter denitrificans (strain ATCC 33942 / OCh 114) (Erythrobacter sp. (strain OCh 114)), this protein is UDP-N-acetylenolpyruvoylglucosamine reductase.